Here is a 187-residue protein sequence, read N- to C-terminus: MSGSSGCPFFLWGLLAFLGLALVISLIFNISHYVEKQRRDEIYRYSDDYIPRVDEYYVEDAPIYGNLENIIPEPLDENCYEQMKGRPQRSASDPQEVAAPAQVPAEAQMCYASLDHSVKGKRRRPRKQNTNVSDRGKDTQVYTMDANVSQINMVESFPPDNQVVEESIHDDPARLFGLIRAKREPVI.

At 1-7 (MSGSSGC) the chain is on the extracellular side. A helical; Signal-anchor for type III membrane protein transmembrane segment spans residues 8 to 28 (PFFLWGLLAFLGLALVISLIF). Residues 29–187 (NISHYVEKQR…LIRAKREPVI (159 aa)) lie on the Cytoplasmic side of the membrane. Residue Ser-46 is modified to Phosphoserine. Tyr-80 carries the phosphotyrosine modification. Positions 80–83 (YEQM) are interaction with PIK3R1. The disordered stretch occupies residues 117 to 138 (SVKGKRRRPRKQNTNVSDRGKD).

In terms of assembly, homodimer; disulfide-linked. Interacts with CD3Z. When phosphorylated, interacts with PIK3R1. In terms of processing, phosphorylated on tyrosines upon TCR activation. As to expression, present in T-cells (at protein level).

It is found in the cell membrane. In terms of biological role, stabilizes the TCR (T-cell antigen receptor)/CD3 complex at the surface of T-cells. This chain is T-cell receptor-associated transmembrane adapter 1 (Trat1), found in Mus musculus (Mouse).